A 132-amino-acid polypeptide reads, in one-letter code: Binder of sperm protein homolog 1 (132 aa).

The first 17 residues, 1–17, serve as a signal peptide directing secretion; sequence MGSLMLLFVETTRNSSA. Fibronectin type-II domains lie at 40-84 and 85-132; these read VTDG…FCSA and EDFA…KYCE. 4 disulfides stabilise this stretch: cysteine 45/cysteine 69, cysteine 59/cysteine 82, cysteine 90/cysteine 116, and cysteine 104/cysteine 131. The N-linked (GlcNAc...) asparagine glycan is linked to asparagine 53.

This sequence belongs to the seminal plasma protein family. In terms of tissue distribution, expressed only in the epididymis.

It is found in the secreted. Functionally, binds sperm in vitro and promotes sperm capacitation. Specifically promotes capacitation induced by high density lipoproteins (HDLs). Also binds heparin, phospholipid liposomes, and weakly to gelatin. Does not bind chondroitin sulfate B. This Homo sapiens (Human) protein is Binder of sperm protein homolog 1 (BSPH1).